Reading from the N-terminus, the 418-residue chain is D-inositol 3-phosphate glycosyltransferase (418 aa).

Residue His-9 participates in 1D-myo-inositol 3-phosphate binding. Residues 15–16 (QP) and Gly-23 each bind UDP-N-acetyl-alpha-D-glucosamine. 1D-myo-inositol 3-phosphate contacts are provided by residues 20 to 25 (DSGGMN), Lys-78, Tyr-110, Thr-134, and Arg-154. UDP-N-acetyl-alpha-D-glucosamine is bound by residues Arg-231, Lys-236, and Arg-294. Mg(2+) contacts are provided by Tyr-303, Arg-304, and Ala-306. UDP-N-acetyl-alpha-D-glucosamine contacts are provided by Glu-316 and Glu-324. Thr-330 contacts Mg(2+).

It belongs to the glycosyltransferase group 1 family. MshA subfamily. In terms of assembly, homodimer.

The catalysed reaction is 1D-myo-inositol 3-phosphate + UDP-N-acetyl-alpha-D-glucosamine = 1D-myo-inositol 2-acetamido-2-deoxy-alpha-D-glucopyranoside 3-phosphate + UDP + H(+). Functionally, catalyzes the transfer of a N-acetyl-glucosamine moiety to 1D-myo-inositol 3-phosphate to produce 1D-myo-inositol 2-acetamido-2-deoxy-glucopyranoside 3-phosphate in the mycothiol biosynthesis pathway. The protein is D-inositol 3-phosphate glycosyltransferase of Corynebacterium glutamicum (strain R).